The following is a 228-amino-acid chain: Phosphatidylglycerophosphate phosphatase PTPMT2 (228 aa).

Residues 1–10 are compositionally biased toward acidic residues; the sequence is MTDETEEDDT. The tract at residues 1 to 30 is disordered; sequence MTDETEEDDTTQQRSSRNDGVSKNKGKGFK. The substrate site is built by Tyr48 and Asp126. A Tyrosine-protein phosphatase domain is found at 66-213; that stretch reads WWDQIDEYLL…VEEFSRLQSP (148 aa). The active-site Phosphocysteine intermediate is the Cys157. Residues 157 to 163 carry the Glucan phosphatase signature motif CXAGXGR motif; sequence CKAGRGR. Residue 158–163 coordinates substrate; that stretch reads KAGRGR.

It belongs to the protein-tyrosine phosphatase family. Non-receptor class dual specificity subfamily. As to expression, expressed in roots, leaves, stems and flowers. In terms of tissue distribution, expressed at low levels in stems and flowers.

It carries out the reaction O-phospho-L-seryl-[protein] + H2O = L-seryl-[protein] + phosphate. It catalyses the reaction O-phospho-L-threonyl-[protein] + H2O = L-threonyl-[protein] + phosphate. The enzyme catalyses O-phospho-L-tyrosyl-[protein] + H2O = L-tyrosyl-[protein] + phosphate. The catalysed reaction is a 1,2-diacyl-sn-glycero-3-phospho-(1'-sn-glycero-3'-phosphate) + H2O = a 1,2-diacyl-sn-glycero-3-phospho-(1'-sn-glycerol) + phosphate. The protein operates within phospholipid metabolism; phosphatidylglycerol biosynthesis; phosphatidylglycerol from CDP-diacylglycerol: step 2/2. Functionally, exhibits phosphatidylglycerophosphate phosphatase activity. Involved in root growth and columella cells organization. May possess protein phosphatase activity. The polypeptide is Phosphatidylglycerophosphate phosphatase PTPMT2 (Arabidopsis thaliana (Mouse-ear cress)).